The sequence spans 444 residues: 3-phosphoshikimate 1-carboxyvinyltransferase (444 aa).

3-phosphoshikimate contacts are provided by Lys32, Ser33, and Arg37. Phosphoenolpyruvate is bound at residue Lys32. Phosphoenolpyruvate contacts are provided by Gly105 and Arg133. Ser178, Gln180, Asp326, and Lys353 together coordinate 3-phosphoshikimate. A phosphoenolpyruvate-binding site is contributed by Gln180. Asp326 acts as the Proton acceptor in catalysis. Phosphoenolpyruvate contacts are provided by Arg357 and Arg398.

Belongs to the EPSP synthase family. In terms of assembly, monomer.

It localises to the cytoplasm. It catalyses the reaction 3-phosphoshikimate + phosphoenolpyruvate = 5-O-(1-carboxyvinyl)-3-phosphoshikimate + phosphate. Its pathway is metabolic intermediate biosynthesis; chorismate biosynthesis; chorismate from D-erythrose 4-phosphate and phosphoenolpyruvate: step 6/7. In terms of biological role, catalyzes the transfer of the enolpyruvyl moiety of phosphoenolpyruvate (PEP) to the 5-hydroxyl of shikimate-3-phosphate (S3P) to produce enolpyruvyl shikimate-3-phosphate and inorganic phosphate. The chain is 3-phosphoshikimate 1-carboxyvinyltransferase from Nitrosococcus oceani (strain ATCC 19707 / BCRC 17464 / JCM 30415 / NCIMB 11848 / C-107).